Here is a 558-residue protein sequence, read N- to C-terminus: Trehalase 1 (558 aa).

The protein belongs to the glycosyl hydrolase 15 family.

The enzyme catalyses alpha,alpha-trehalose + H2O = alpha-D-glucose + beta-D-glucose. The protein operates within glycan degradation; trehalose degradation; D-glucose from alpha,alpha-trehalose: step 1/1. Its function is as follows. Catalyzes the hydrolysis of alpha,alpha-trehalose into two molecules of D-glucose. The protein is Trehalase 1 (treH1) of Sulfolobus acidocaldarius (strain ATCC 33909 / DSM 639 / JCM 8929 / NBRC 15157 / NCIMB 11770).